The following is a 156-amino-acid chain: Small ribosomal subunit protein uS7 (156 aa).

The protein belongs to the universal ribosomal protein uS7 family. Part of the 30S ribosomal subunit. Contacts proteins S9 and S11.

In terms of biological role, one of the primary rRNA binding proteins, it binds directly to 16S rRNA where it nucleates assembly of the head domain of the 30S subunit. Is located at the subunit interface close to the decoding center, probably blocks exit of the E-site tRNA. In Shewanella loihica (strain ATCC BAA-1088 / PV-4), this protein is Small ribosomal subunit protein uS7.